A 178-amino-acid chain; its full sequence is MRCLLLTLGLALLCGVQAVEVTPIMTELDTQKVAGTWHTVAMAVSDVSLLDAKSSPLKAYVEGLKPTPEGDLEILLQKRENDKCAQEVLLAKKTDIPAVFKINALDENQLFLLDTDYDSHLLLCMENSASPEHSLVCQSLARTLEVDDQIREKFEDALKTLSVPMRILPAQLEEQCRV.

The N-terminal stretch at Met-1–Ala-18 is a signal peptide. 2 disulfide bridges follow: Cys-84–Cys-176 and Cys-124–Cys-137.

This sequence belongs to the calycin superfamily. Lipocalin family. As to quaternary structure, under physiological conditions beta-lactoglobulin exists as an equilibrium mixture of monomeric and dimeric forms.

It localises to the secreted. Lactoglobulin is the primary component of whey, it binds retinol and is probably involved in the transport of that molecule. This Sus scrofa (Pig) protein is Beta-lactoglobulin-1A/1C.